The sequence spans 184 residues: Shikimate kinase (184 aa).

20–25 (GVGKSR) provides a ligand contact to ATP. Ser24 contacts Mg(2+). Residues Asp42, Arg66, and Gly88 each coordinate substrate. Residue Arg127 participates in ATP binding. Arg146 contributes to the substrate binding site. Arg162 lines the ATP pocket.

It belongs to the shikimate kinase family. As to quaternary structure, monomer. The cofactor is Mg(2+).

Its subcellular location is the cytoplasm. It carries out the reaction shikimate + ATP = 3-phosphoshikimate + ADP + H(+). Its pathway is metabolic intermediate biosynthesis; chorismate biosynthesis; chorismate from D-erythrose 4-phosphate and phosphoenolpyruvate: step 5/7. Catalyzes the specific phosphorylation of the 3-hydroxyl group of shikimic acid using ATP as a cosubstrate. This Thermus thermophilus (strain ATCC BAA-163 / DSM 7039 / HB27) protein is Shikimate kinase.